We begin with the raw amino-acid sequence, 203 residues long: V-type ATP synthase subunit D (203 aa).

The protein belongs to the V-ATPase D subunit family.

Functionally, produces ATP from ADP in the presence of a proton gradient across the membrane. The polypeptide is V-type ATP synthase subunit D (Streptococcus pneumoniae serotype 19F (strain G54)).